An 867-amino-acid chain; its full sequence is KH domain-containing protein akap-1 (867 aa).

A helical membrane pass occupies residues 108 to 128 (HALLIALGGFSIAALFVWYIN). 2 disordered regions span residues 145–458 (SNGL…QKRV) and 481–523 (HENA…GLTT). The segment covering 152-162 (ATASDVQTENG) has biased composition (polar residues). 4 stretches are compositionally biased toward basic and acidic residues: residues 186–211 (QQKD…DKKQ), 218–239 (TEKK…DHVA), 247–275 (SEHK…EIEV), and 298–307 (QFVKKEEPKL). Positions 336–345 (TKMNDATSPL) are enriched in polar residues. The span at 363–383 (EMEKSFNEEEFRLNESSDIDR) shows a compositional bias: basic and acidic residues. The span at 397 to 408 (NKNRSSQKRKGG) shows a compositional bias: basic residues. Composition is skewed to basic and acidic residues over residues 441–458 (LTKE…QKRV) and 481–490 (HENASYEKSD). The span at 494–507 (LDSQNSEASSQDSG) shows a compositional bias: polar residues. The region spanning 528-595 (LPMYEFEIPN…DEINHCLQML (68 aa)) is the KH domain. In terms of domain architecture, Tudor spans 689–747 (PCQNGLLCAAPVGNAWFRAVTVQYFDETDEVFVKFVDYGGYSKMARQDLRQIRTDLMSL).

Its subcellular location is the membrane. The chain is KH domain-containing protein akap-1 from Caenorhabditis elegans.